Reading from the N-terminus, the 279-residue chain is Orotidine 5'-phosphate decarboxylase (279 aa).

Substrate contacts are provided by residues aspartate 8, lysine 30, 58 to 67 (DLKFHDIPNT), threonine 117, arginine 177, glutamine 186, glycine 206, and arginine 207. Residue lysine 60 is the Proton donor of the active site.

The protein belongs to the OMP decarboxylase family. Type 1 subfamily. Homodimer.

The catalysed reaction is orotidine 5'-phosphate + H(+) = UMP + CO2. Its pathway is pyrimidine metabolism; UMP biosynthesis via de novo pathway; UMP from orotate: step 2/2. Functionally, catalyzes the decarboxylation of orotidine 5'-monophosphate (OMP) to uridine 5'-monophosphate (UMP). In Campylobacter jejuni subsp. jejuni serotype O:2 (strain ATCC 700819 / NCTC 11168), this protein is Orotidine 5'-phosphate decarboxylase.